The primary structure comprises 412 residues: Phospholipase A1-IIdelta (412 aa).

The residue at position 2 (alanine 2) is an N-acetylalanine. Serine 238 acts as the Acyl-ester intermediate in catalysis. Active-site charge relay system residues include serine 238, aspartate 297, and histidine 336.

This sequence belongs to the AB hydrolase superfamily. Lipase family. In terms of tissue distribution, expressed in leaves, stems, flowers and siliques, and, at low levels, in seeds and roots (at protein level).

It is found in the cytoplasm. Functionally, acylhydrolase that catalyzes the hydrolysis of phosphatidylcholine (PC) at the sn-1 position. High activity toward PC, medium activity toward monogalactosyldiacylglycerol (MGDG) and low activity toward triacylglycerol (TAG). Confers sensitivity to UV-B radiation probably by deesterifying membrane phospholipids. This is Phospholipase A1-IIdelta from Arabidopsis thaliana (Mouse-ear cress).